The sequence spans 471 residues: Uronate isomerase (471 aa).

It belongs to the metallo-dependent hydrolases superfamily. Uronate isomerase family.

The enzyme catalyses D-glucuronate = D-fructuronate. It catalyses the reaction aldehydo-D-galacturonate = keto-D-tagaturonate. Its pathway is carbohydrate metabolism; pentose and glucuronate interconversion. The chain is Uronate isomerase from Xanthomonas campestris pv. campestris (strain B100).